Reading from the N-terminus, the 518-residue chain is Putative cytochrome P450 CYP13A7 (518 aa).

Cys-464 serves as a coordination point for heme.

The protein belongs to the cytochrome P450 family. It depends on heme as a cofactor.

Functionally, cytochromes P450 are a group of heme-thiolate monooxygenases. They oxidize a variety of structurally unrelated compounds, including steroids, fatty acids, and xenobiotics. This chain is Putative cytochrome P450 CYP13A7 (cyp-13A7), found in Caenorhabditis elegans.